Reading from the N-terminus, the 521-residue chain is Probable rhamnogalacturonase B (521 aa).

The signal sequence occupies residues 1-21 (MRLHAFTLLSLLGLVPSFAAA). Cys-42 and Cys-68 form a disulfide bridge. N-linked (GlcNAc...) asparagine glycosylation occurs at Asn-145. Residue Asp-219 is the Proton donor of the active site. Residues Cys-221 and Cys-238 are joined by a disulfide bond. A glycan (N-linked (GlcNAc...) asparagine) is linked at Asn-239. The active site involves His-294. A glycan (N-linked (GlcNAc...) asparagine) is linked at Asn-321. Cystine bridges form between Cys-344–Cys-350 and Cys-372–Cys-381. Positions 462–521 (ETPAAASRSEQVVQGAPQETGQSAPESAGPVPSGNPGPVPTGGSRPSRHRHGHHHFGSAI) are disordered. Polar residues predominate over residues 469 to 486 (RSEQVVQGAPQETGQSAP). Over residues 507–521 (PSRHRHGHHHFGSAI) the composition is skewed to basic residues.

Belongs to the glycosyl hydrolase 28 family.

It localises to the secreted. The catalysed reaction is Endohydrolysis of alpha-D-GalA-(1-&gt;2)-alpha-L-Rha glycosidic bond in the rhamnogalacturonan I backbone with initial inversion of anomeric configuration releasing oligosaccharides with beta-D-GalA at the reducing end.. Functionally, pectinolytic enzymes consist of four classes of enzymes: pectine lyase, polygalacturonase, pectin methylesterase and rhamnogalacturonase. Hydrolyzes alpha-D-galacturonopyranosyl-(1,2)-alpha-L-rhamnopyranosyl linkages in the backbone of the hairy regions of pectins. The protein is Probable rhamnogalacturonase B (rhgB) of Aspergillus fumigatus (strain CBS 144.89 / FGSC A1163 / CEA10) (Neosartorya fumigata).